A 250-amino-acid polypeptide reads, in one-letter code: Probable transcriptional regulatory protein Cphamn1_0542 (250 aa).

Belongs to the TACO1 family.

It localises to the cytoplasm. In Chlorobium phaeobacteroides (strain BS1), this protein is Probable transcriptional regulatory protein Cphamn1_0542.